We begin with the raw amino-acid sequence, 386 residues long: Cytochrome b (386 aa).

4 helical membrane-spanning segments follow: residues 32-52 (FGSL…TLAM), 76-98 (WMIR…LHIG), 113-133 (PWSI…LGYV), and 179-199 (FFSL…MHLL). Positions 82 and 96 each coordinate heme b. Residues histidine 183 and histidine 197 each coordinate heme b. Position 202 (histidine 202) interacts with a ubiquinone. 4 helical membrane passes run 225 to 245 (YTFK…LFLF), 289 to 309 (LGGV…PLLD), 321 to 341 (LMKF…WCGS), and 348 to 368 (FITL…IIVP).

Belongs to the cytochrome b family. As to quaternary structure, fungal cytochrome b-c1 complex contains 10 subunits; 3 respiratory subunits, 2 core proteins and 5 low-molecular weight proteins. Cytochrome b-c1 complex is a homodimer. Heme b serves as cofactor.

The protein localises to the mitochondrion inner membrane. Its function is as follows. Component of the ubiquinol-cytochrome c reductase complex (complex III or cytochrome b-c1 complex) that is part of the mitochondrial respiratory chain. The b-c1 complex mediates electron transfer from ubiquinol to cytochrome c. Contributes to the generation of a proton gradient across the mitochondrial membrane that is then used for ATP synthesis. In Rhizopus oryzae (Mucormycosis agent), this protein is Cytochrome b (cob).